Here is a 189-residue protein sequence, read N- to C-terminus: Interferon alpha-1 (189 aa).

The first 23 residues, 1–23, serve as a signal peptide directing secretion; sequence MARLCAFLMVLAVLSYWPTCSLG. Intrachain disulfides connect Cys24/Cys122 and Cys52/Cys162. Asn101 is a glycosylation site (N-linked (GlcNAc...) asparagine).

Belongs to the alpha/beta interferon family. Interacts with CR2. In terms of processing, glycosylated.

It localises to the secreted. Its function is as follows. Produced by macrophages, IFN-alpha have antiviral activities. Interferon stimulates the production of two enzymes: a protein kinase and an oligoadenylate synthetase. In Mus musculus (Mouse), this protein is Interferon alpha-1 (Ifna1).